The sequence spans 223 residues: Neurotrophic factor BDNF precursor form (223 aa).

The first 5 residues, 1-5 (SCMKA), serve as a signal peptide directing secretion. A propeptide spanning residues 6–114 (APMKEVSIRG…AANMSMRVRR (109 aa)) is cleaved from the precursor. An N-linked (GlcNAc...) asparagine glycan is attached at Asn107. Intrachain disulfides connect Cys127/Cys194 and Cys172/Cys223.

Belongs to the NGF-beta family.

It is found in the secreted. In terms of biological role, promotes the survival of neuronal populations that are all located either in the central nervous system or directly connected to it. The protein is Neurotrophic factor BDNF precursor form (BDNF) of Calabaria reinhardtii (Calabar boa).